A 493-amino-acid polypeptide reads, in one-letter code: Alpha-amylase-related protein (493 aa).

Positions 1–19 (MFKFALTLTLCLAGSLSLA) are cleaved as a signal peptide. Q20 bears the Pyrrolidone carboxylic acid mark. A disulfide bridge connects residues C47 and C103. The Ca(2+) site is built by N117, Q168, and D177. A disulfide bridge connects residues C156 and C170. R205 provides a ligand contact to chloride. The Nucleophile role is filled by D207. H211 contacts Ca(2+). E244 serves as the catalytic Proton donor. Residues N307 and R342 each coordinate chloride. Intrachain disulfides connect C375/C381, C417/C440, and C447/C459.

This sequence belongs to the glycosyl hydrolase 13 family. As to quaternary structure, monomer. It depends on Ca(2+) as a cofactor. Chloride is required as a cofactor.

It is found in the secreted. It carries out the reaction Endohydrolysis of (1-&gt;4)-alpha-D-glucosidic linkages in polysaccharides containing three or more (1-&gt;4)-alpha-linked D-glucose units.. This chain is Alpha-amylase-related protein (Amyrel), found in Drosophila sechellia (Fruit fly).